Consider the following 316-residue polypeptide: Glutathione synthetase (316 aa).

The ATP-grasp domain occupies 124–311 (NEKLAALLFP…IAGLLFDAIE (188 aa)). 151–208 (FVLEHGQAVLKPLDGMGGRSIFRSGSGDPNLNVILETLTDGNRKLTLAQRFIPDITAG) serves as a coordination point for ATP. Residues Glu-282 and Asn-284 each contribute to the Mg(2+) site.

It belongs to the prokaryotic GSH synthase family. The cofactor is Mg(2+). Requires Mn(2+) as cofactor.

It catalyses the reaction gamma-L-glutamyl-L-cysteine + glycine + ATP = glutathione + ADP + phosphate + H(+). It functions in the pathway sulfur metabolism; glutathione biosynthesis; glutathione from L-cysteine and L-glutamate: step 2/2. The polypeptide is Glutathione synthetase (Xanthomonas axonopodis pv. citri (strain 306)).